A 335-amino-acid chain; its full sequence is tRNA N6-adenosine threonylcarbamoyltransferase (335 aa).

Fe cation is bound by residues histidine 111 and histidine 115. Substrate-binding positions include 133–137 (IISGG), aspartate 166, glycine 179, aspartate 183, and asparagine 268. Position 296 (aspartate 296) interacts with Fe cation.

This sequence belongs to the KAE1 / TsaD family. Fe(2+) serves as cofactor.

Its subcellular location is the cytoplasm. It catalyses the reaction L-threonylcarbamoyladenylate + adenosine(37) in tRNA = N(6)-L-threonylcarbamoyladenosine(37) in tRNA + AMP + H(+). Functionally, required for the formation of a threonylcarbamoyl group on adenosine at position 37 (t(6)A37) in tRNAs that read codons beginning with adenine. Is involved in the transfer of the threonylcarbamoyl moiety of threonylcarbamoyl-AMP (TC-AMP) to the N6 group of A37, together with TsaE and TsaB. TsaD likely plays a direct catalytic role in this reaction. This Aquifex aeolicus (strain VF5) protein is tRNA N6-adenosine threonylcarbamoyltransferase.